Reading from the N-terminus, the 72-residue chain is Bradykinin-potentiating peptide BmKbpp (72 aa).

The signal sequence occupies residues 1–22; sequence MNKKTLLVIFFVTMLIVDEVNS. The propeptide occupies 70–72; the sequence is RRR.

The protein belongs to the non-disulfide-bridged peptide (NDBP) superfamily. Long chain multifunctional peptide (group 2) family. Expressed by the venom gland.

The protein resides in the secreted. Functionally, amphipathic peptide that shows bradykinin potentiating activity and antimicrobial activities against bacteria and fungi. Has higher antibacterial activities against Gram-negative than against Gram-positive bacteria. Also inhibits NADPH oxidase-dependent superoxide production (IC(50) is 0.4 uM on granulocytes stimulated with PMA, IC(50) is 0.51 uM on HL-60 cells undifferentiated and IC(50) is 0.53 uM on HL-60 cells treated with DMSO). The C-terminal peptide shows a higher bradykinin potentiating activity than the complete peptide. In Olivierus martensii (Manchurian scorpion), this protein is Bradykinin-potentiating peptide BmKbpp.